The sequence spans 143 residues: Ribonuclease P protein component 2 (143 aa).

The protein belongs to the eukaryotic/archaeal RNase P protein component 2 family. Consists of a catalytic RNA component and at least 4-5 protein subunits.

Its subcellular location is the cytoplasm. The enzyme catalyses Endonucleolytic cleavage of RNA, removing 5'-extranucleotides from tRNA precursor.. Part of ribonuclease P, a protein complex that generates mature tRNA molecules by cleaving their 5'-ends. The protein is Ribonuclease P protein component 2 of Saccharolobus solfataricus (strain ATCC 35092 / DSM 1617 / JCM 11322 / P2) (Sulfolobus solfataricus).